The chain runs to 346 residues: UDP-N-acetylenolpyruvoylglucosamine reductase (346 aa).

One can recognise an FAD-binding PCMH-type domain in the interval 18–189 (LHAQARAFIA…VSVVFALKTH (172 aa)). Residue arginine 165 is part of the active site. Serine 240 serves as the catalytic Proton donor. Glutamate 336 is a catalytic residue.

The protein belongs to the MurB family. It depends on FAD as a cofactor.

It localises to the cytoplasm. The enzyme catalyses UDP-N-acetyl-alpha-D-muramate + NADP(+) = UDP-N-acetyl-3-O-(1-carboxyvinyl)-alpha-D-glucosamine + NADPH + H(+). Its pathway is cell wall biogenesis; peptidoglycan biosynthesis. Functionally, cell wall formation. The polypeptide is UDP-N-acetylenolpyruvoylglucosamine reductase (Neisseria gonorrhoeae (strain ATCC 700825 / FA 1090)).